The sequence spans 542 residues: Neutral amino acid transporter B(0) (542 aa).

At methionine 1 the chain carries N-acetylmethionine. The Cytoplasmic portion of the chain corresponds to methionine 1–alanine 52. Residues asparagine 53–leucine 82 form a helical membrane-spanning segment. At glycine 83–glutamate 95 the chain is on the extracellular side. Residues leucine 96 to alanine 117 form a helical membrane-spanning segment. At alanine 118–tryptophan 131 the chain is on the cytoplasmic side. A helical membrane pass occupies residues alanine 132 to leucine 154. The Extracellular portion of the chain corresponds to glutamine 155–glutamine 225. 2 N-linked (GlcNAc...) asparagine glycosylation sites follow: asparagine 164 and asparagine 213. Residues glutamate 226 to leucine 249 traverse the membrane as a helical segment. The Cytoplasmic segment spans residues glycine 250 to arginine 258. A helical transmembrane segment spans residues phenylalanine 259–valine 286. Topologically, residues alanine 287 to isoleucine 307 are extracellular. Residues leucine 308–phenylalanine 329 traverse the membrane as a helical segment. The Cytoplasmic portion of the chain corresponds to threonine 330–proline 334. The segment at residues tyrosine 335–valine 365 is an intramembrane region (discontinuously helical). Residues glutamate 366 to histidine 374 are Cytoplasmic-facing. The chain crosses the membrane as a helical span at residues isoleucine 375–phenylalanine 401. Na(+) is bound by residues glycine 383, threonine 385, and asparagine 387. The Extracellular segment spans residues isoleucine 402–lysine 414. The segment at residues isoleucine 415–asparagine 448 is an intramembrane region (discontinuously helical). The Extracellular segment spans residues leucine 449 to aspartate 461. Residues tryptophan 462–leucine 483 form a helical membrane-spanning segment. Na(+)-binding residues include asparagine 472 and aspartate 476. Residues glutamine 484–methionine 542 are Cytoplasmic-facing. Serine 494 bears the Phosphoserine mark. Phosphothreonine is present on threonine 495. 3 positions are modified to phosphoserine: serine 504, serine 536, and serine 540. The segment at aspartate 509–methionine 542 is disordered.

It belongs to the dicarboxylate/amino acid:cation symporter (DAACS) (TC 2.A.23) family. SLC1A5 subfamily. As to quaternary structure, homotrimer.

The protein localises to the cell membrane. The protein resides in the melanosome. The enzyme catalyses L-glutamine(out) + L-serine(in) + Na(+)(out) = L-glutamine(in) + L-serine(out) + Na(+)(in). The catalysed reaction is L-glutamine(in) + L-serine(out) + Na(+)(out) = L-glutamine(out) + L-serine(in) + Na(+)(in). It carries out the reaction L-threonine(in) + L-glutamine(out) + Na(+)(out) = L-threonine(out) + L-glutamine(in) + Na(+)(in). It catalyses the reaction L-threonine(out) + L-glutamine(in) + Na(+)(out) = L-threonine(in) + L-glutamine(out) + Na(+)(in). The enzyme catalyses L-asparagine(in) + L-glutamine(out) + Na(+)(out) = L-asparagine(out) + L-glutamine(in) + Na(+)(in). The catalysed reaction is L-asparagine(out) + L-glutamine(in) + Na(+)(out) = L-asparagine(in) + L-glutamine(out) + Na(+)(in). It carries out the reaction L-glutamine(in) + L-alanine(out) + Na(+)(out) = L-glutamine(out) + L-alanine(in) + Na(+)(in). It catalyses the reaction L-valine(out) + L-glutamine(in) + Na(+)(out) = L-valine(in) + L-glutamine(out) + Na(+)(in). The enzyme catalyses L-glutamine(in) + L-methionine(out) + Na(+)(out) = L-glutamine(out) + L-methionine(in) + Na(+)(in). The catalysed reaction is L-glutamine(in) + L-glutamate(out) + Na(+)(out) + H(+)(out) = L-glutamine(out) + L-glutamate(in) + Na(+)(in) + H(+)(in). It carries out the reaction D-serine(in) + L-glutamine(out) + Na(+)(out) = D-serine(out) + L-glutamine(in) + Na(+)(in). It catalyses the reaction D-serine(in) + L-alanine(out) + Na(+)(out) = D-serine(out) + L-alanine(in) + Na(+)(in). The enzyme catalyses nitrate(in) = nitrate(out). The catalysed reaction is iodide(out) = iodide(in). It carries out the reaction thiocyanate(in) = thiocyanate(out). Its function is as follows. Sodium-coupled antiporter of neutral amino acids. In a tri-substrate transport cycle, exchanges neutral amino acids between the extracellular and intracellular compartments, coupled to the inward cotransport of at least one sodium ion. The preferred substrate is the essential amino acid L-glutamine, a precursor for biosynthesis of proteins, nucleotides and amine sugars as well as an alternative fuel for mitochondrial oxidative phosphorylation. Exchanges L-glutamine with other neutral amino acids such as L-serine, L-threonine and L-asparagine in a bidirectional way. Provides L-glutamine to proliferating stem and activated cells driving the metabolic switch toward cell differentiation. The transport cycle is usually pH-independent, with the exception of L-glutamate. Transports extracellular L-glutamate coupled to the cotransport of one proton and one sodium ion in exchange for intracellular L-glutamine counter-ion. May provide for L-glutamate uptake in glial cells regulating glutamine/glutamate cycle in the nervous system. Can transport D-amino acids. Mediates D-serine release from the retinal glia potentially affecting NMDA receptor function in retinal neurons. Displays sodium- and amino acid-dependent but uncoupled channel-like anion conductance with a preference SCN(-) &gt;&gt; NO3(-) &gt; I(-) &gt; Cl(-). Through binding of the fusogenic protein syncytin-1/ERVW-1 may mediate trophoblasts syncytialization, the spontaneous fusion of their plasma membranes, an essential process in placental development. The sequence is that of Neutral amino acid transporter B(0) (SLC1A5) from Macaca fascicularis (Crab-eating macaque).